The following is a 551-amino-acid chain: Adenine deaminase (551 aa).

Belongs to the metallo-dependent hydrolases superfamily. Adenine deaminase family. It depends on Mn(2+) as a cofactor.

The catalysed reaction is adenine + H2O + H(+) = hypoxanthine + NH4(+). The chain is Adenine deaminase from Leuconostoc citreum (strain KM20).